A 489-amino-acid polypeptide reads, in one-letter code: Transcription factor TGAL11 (489 aa).

Over residues 87–99 the composition is skewed to low complexity; sequence AATATATARPPAT. A disordered region spans residues 87-181; it reads AATATATARP…SDHRMTKTLD (95 aa). Polar residues predominate over residues 121 to 139; sequence SNVTADTTDSESSSKNNGD. The segment covering 148–159 has biased composition (low complexity); sequence ASQFDQIPQQQQ. Residues 171–181 show a composition bias toward basic and acidic residues; that stretch reads HSDHRMTKTLD. Residues 181–225 form the bZIP domain; the sequence is DPKIMRRLAQNREAARKSRLRKKAYIQQLESSKLRLAQMEQDLER. Residues 183–203 are basic motif; that stretch reads KIMRRLAQNREAARKSRLRKK. The leucine-zipper stretch occupies residues 209 to 223; that stretch reads LESSKLRLAQMEQDL. A DOG1 domain is found at 245–460; it reads AAMFDAEYGR…RALSSLWASR (216 aa).

It belongs to the bZIP family.

It localises to the nucleus. In terms of biological role, transcriptional regulator involved in defense response. This chain is Transcription factor TGAL11, found in Oryza sativa subsp. japonica (Rice).